The sequence spans 274 residues: MQKVVKLNNIKIGNDLPFVLITGPCQIEGKDHALFMAEKLVKLTSKLEIPFIYKSSFDKANRTSVHGIRGVGIEKGLEILSKVKSEFDCPIVTDVHSESQCTETAEVADILQIPAFLCRQTDLLQAAAKTGKIVKVKKGQFLAPWDMKNVQTKLEAFGVKDILFTERGACFGYNNLVSDMRSLAIMAELNVPVVFDATHSVQQPGGLGGSTGGERKYVELLAKAATSVGIAGIYMEVHQDPDNAPSDGPCMMKLDNLESILIKLKKYDKITKEK.

The protein belongs to the KdsA family.

Its subcellular location is the cytoplasm. The enzyme catalyses D-arabinose 5-phosphate + phosphoenolpyruvate + H2O = 3-deoxy-alpha-D-manno-2-octulosonate-8-phosphate + phosphate. The protein operates within carbohydrate biosynthesis; 3-deoxy-D-manno-octulosonate biosynthesis; 3-deoxy-D-manno-octulosonate from D-ribulose 5-phosphate: step 2/3. Its pathway is bacterial outer membrane biogenesis; lipopolysaccharide biosynthesis. The chain is 2-dehydro-3-deoxyphosphooctonate aldolase from Rickettsia conorii (strain ATCC VR-613 / Malish 7).